We begin with the raw amino-acid sequence, 305 residues long: Tyrosine recombinase XerC (305 aa).

One can recognise a Core-binding (CB) domain in the interval 4–95 (TSIQALINKW…AVKNFYRFLE (92 aa)). In terms of domain architecture, Tyr recombinase spans 116–298 (LLPKALSEDD…SIKHLEAVYT (183 aa)). Active-site residues include arginine 159, lysine 182, histidine 250, arginine 253, and histidine 276. The active-site O-(3'-phospho-DNA)-tyrosine intermediate is the tyrosine 285.

It belongs to the 'phage' integrase family. XerC subfamily. Forms a cyclic heterotetrameric complex composed of two molecules of XerC and two molecules of XerD.

It localises to the cytoplasm. Its function is as follows. Site-specific tyrosine recombinase, which acts by catalyzing the cutting and rejoining of the recombining DNA molecules. The XerC-XerD complex is essential to convert dimers of the bacterial chromosome into monomers to permit their segregation at cell division. It also contributes to the segregational stability of plasmids. The polypeptide is Tyrosine recombinase XerC (Rickettsia conorii (strain ATCC VR-613 / Malish 7)).